A 165-amino-acid polypeptide reads, in one-letter code: NADPH-dependent 7-cyano-7-deazaguanine reductase (165 aa).

C56 functions as the Thioimide intermediate in the catalytic mechanism. Catalysis depends on D63, which acts as the Proton donor. Substrate is bound by residues 78 to 80 (VES) and 97 to 98 (HE).

It belongs to the GTP cyclohydrolase I family. QueF type 1 subfamily.

It localises to the cytoplasm. The enzyme catalyses 7-aminomethyl-7-carbaguanine + 2 NADP(+) = 7-cyano-7-deazaguanine + 2 NADPH + 3 H(+). It participates in tRNA modification; tRNA-queuosine biosynthesis. Functionally, catalyzes the NADPH-dependent reduction of 7-cyano-7-deazaguanine (preQ0) to 7-aminomethyl-7-deazaguanine (preQ1). The protein is NADPH-dependent 7-cyano-7-deazaguanine reductase of Oceanobacillus iheyensis (strain DSM 14371 / CIP 107618 / JCM 11309 / KCTC 3954 / HTE831).